Here is an 864-residue protein sequence, read N- to C-terminus: Leucine--tRNA ligase (864 aa).

Positions 42–52 (PYPSGKLHMGH) match the 'HIGH' region motif. The short motif at 624–628 (KMSKS) is the 'KMSKS' region element. Lysine 627 serves as a coordination point for ATP.

It belongs to the class-I aminoacyl-tRNA synthetase family.

The protein resides in the cytoplasm. The enzyme catalyses tRNA(Leu) + L-leucine + ATP = L-leucyl-tRNA(Leu) + AMP + diphosphate. This chain is Leucine--tRNA ligase, found in Burkholderia pseudomallei (strain 668).